A 240-amino-acid polypeptide reads, in one-letter code: DNA repair protein RecO (240 aa).

This sequence belongs to the RecO family.

Its function is as follows. Involved in DNA repair and RecF pathway recombination. In Wolbachia sp. subsp. Drosophila simulans (strain wRi), this protein is DNA repair protein RecO.